Here is a 330-residue protein sequence, read N- to C-terminus: Cathepsin K (330 aa).

The N-terminal stretch at 1–16 (MWGLKVVLLLPVMSSA) is a signal peptide. The propeptide at 17–115 (LYPEEILDTQ…TLYIPDWEGR (99 aa)) is activation peptide. The N-linked (GlcNAc...) asparagine glycan is linked to Asn-104. 3 disulfide bridges follow: Cys-137-Cys-178, Cys-171-Cys-211, and Cys-270-Cys-319. Cys-140 is a catalytic residue. Active-site residues include His-277 and Asn-297.

The protein belongs to the peptidase C1 family. As to expression, expressed in the thyroid epithelial cells.

The protein resides in the lysosome. It localises to the secreted. The protein localises to the apical cell membrane. The catalysed reaction is Broad proteolytic activity. With small-molecule substrates and inhibitors, the major determinant of specificity is P2, which is preferably Leu, Met &gt; Phe, and not Arg.. Functionally, thiol protease involved in osteoclastic bone resorption and may participate partially in the disorder of bone remodeling. Displays potent endoprotease activity against fibrinogen at acid pH. May play an important role in extracellular matrix degradation. Involved in the release of thyroid hormone thyroxine (T4) by limited proteolysis of TG/thyroglobulin in the thyroid follicle lumen. The protein is Cathepsin K (CTSK) of Sus scrofa (Pig).